A 340-amino-acid polypeptide reads, in one-letter code: Ferredoxin--NADP reductase (340 aa).

Thr20, Asp39, Gln47, Tyr52, Val92, Phe126, Asp293, and Thr334 together coordinate FAD.

The protein belongs to the ferredoxin--NADP reductase type 2 family. As to quaternary structure, homodimer. The cofactor is FAD.

It carries out the reaction 2 reduced [2Fe-2S]-[ferredoxin] + NADP(+) + H(+) = 2 oxidized [2Fe-2S]-[ferredoxin] + NADPH. The sequence is that of Ferredoxin--NADP reductase from Gluconobacter oxydans (strain 621H) (Gluconobacter suboxydans).